Here is a 117-residue protein sequence, read N- to C-terminus: Large ribosomal subunit protein uL18 (117 aa).

It belongs to the universal ribosomal protein uL18 family. Part of the 50S ribosomal subunit; part of the 5S rRNA/L5/L18/L25 subcomplex. Contacts the 5S and 23S rRNAs.

In terms of biological role, this is one of the proteins that bind and probably mediate the attachment of the 5S RNA into the large ribosomal subunit, where it forms part of the central protuberance. The chain is Large ribosomal subunit protein uL18 from Aeromonas salmonicida (strain A449).